A 301-amino-acid polypeptide reads, in one-letter code: HTH-type transcriptional regulator AbaB (301 aa).

The 58-residue stretch at 1–58 (MDLALLRTFVTVHRAGSFTRAAALLGLSQPAVTSQIRTLERQLGRPLFLRQARGVTPT) folds into the HTH lysR-type domain. A DNA-binding region (H-T-H motif) is located at residues 18–37 (FTRAAALLGLSQPAVTSQIR).

It belongs to the LysR transcriptional regulatory family.

In terms of biological role, putative regulator that may be involved in stimulating antibiotic production in S.antibioticus. This chain is HTH-type transcriptional regulator AbaB, found in Streptomyces antibioticus.